We begin with the raw amino-acid sequence, 166 residues long: Large ribosomal subunit protein uL10 (166 aa).

Belongs to the universal ribosomal protein uL10 family. As to quaternary structure, part of the ribosomal stalk of the 50S ribosomal subunit. The N-terminus interacts with L11 and the large rRNA to form the base of the stalk. The C-terminus forms an elongated spine to which L12 dimers bind in a sequential fashion forming a multimeric L10(L12)X complex.

Its function is as follows. Forms part of the ribosomal stalk, playing a central role in the interaction of the ribosome with GTP-bound translation factors. This Shewanella baltica (strain OS223) protein is Large ribosomal subunit protein uL10.